Here is a 222-residue protein sequence, read N- to C-terminus: Tegument protein UL26 (222 aa).

It belongs to the herpesviridae US22 family. Interacts with UL25. Interacts with ISGylation machinery components ISG15, UBA7 and HERC5; these interactions inhibit global protein ISGylation. Post-translationally, ISGylated; ISGylation regulates UL26 stability and inhibits its activities to suppress NF-kappa-B signaling.

The protein resides in the virion tegument. Its subcellular location is the host nucleus. Its function is as follows. Plays a role in the inhibition of host NF-kappa-B. This inhibition affects both the canonical and the non-canonical pathways. Blocks the induction of host IKK phosphorylation. May also influence the normal phosphorylation state of several tegument proteins including pp28 in virions. Also suppresses virus-induced ISGylation independent of its own ISGylation. In Homo sapiens (Human), this protein is Tegument protein UL26 (UL26).